A 413-amino-acid polypeptide reads, in one-letter code: Multifunctional CCA protein (413 aa).

ATP is bound by residues G8 and R11. G8 and R11 together coordinate CTP. Mg(2+) contacts are provided by D21 and D23. ATP-binding residues include R91, R143, and R146. CTP-binding residues include R91, R143, and R146. In terms of domain architecture, HD spans T232–L333.

It belongs to the tRNA nucleotidyltransferase/poly(A) polymerase family. Bacterial CCA-adding enzyme type 1 subfamily. As to quaternary structure, monomer. Can also form homodimers and oligomers. Mg(2+) is required as a cofactor. Ni(2+) serves as cofactor.

It carries out the reaction a tRNA precursor + 2 CTP + ATP = a tRNA with a 3' CCA end + 3 diphosphate. The enzyme catalyses a tRNA with a 3' CCA end + 2 CTP + ATP = a tRNA with a 3' CCACCA end + 3 diphosphate. Functionally, catalyzes the addition and repair of the essential 3'-terminal CCA sequence in tRNAs without using a nucleic acid template. Adds these three nucleotides in the order of C, C, and A to the tRNA nucleotide-73, using CTP and ATP as substrates and producing inorganic pyrophosphate. tRNA 3'-terminal CCA addition is required both for tRNA processing and repair. Also involved in tRNA surveillance by mediating tandem CCA addition to generate a CCACCA at the 3' terminus of unstable tRNAs. While stable tRNAs receive only 3'-terminal CCA, unstable tRNAs are marked with CCACCA and rapidly degraded. In Burkholderia multivorans (strain ATCC 17616 / 249), this protein is Multifunctional CCA protein.